The chain runs to 201 residues: Thymidine kinase (201 aa).

ATP contacts are provided by residues serine 9–serine 16 and aspartate 87–histidine 90. Catalysis depends on glutamate 88, which acts as the Proton acceptor. The Zn(2+) site is built by cysteine 145, cysteine 147, cysteine 182, and histidine 185.

It belongs to the thymidine kinase family. As to quaternary structure, homotetramer.

It is found in the cytoplasm. The enzyme catalyses thymidine + ATP = dTMP + ADP + H(+). The sequence is that of Thymidine kinase from Photorhabdus laumondii subsp. laumondii (strain DSM 15139 / CIP 105565 / TT01) (Photorhabdus luminescens subsp. laumondii).